A 335-amino-acid polypeptide reads, in one-letter code: Anthranilate phosphoribosyltransferase (335 aa).

5-phospho-alpha-D-ribose 1-diphosphate contacts are provided by residues glycine 79, 82 to 83 (GD), threonine 87, 89 to 92 (NIST), 107 to 115 (KHGNRSASS), and alanine 119. Residue glycine 79 participates in anthranilate binding. Serine 91 contributes to the Mg(2+) binding site. Asparagine 110 provides a ligand contact to anthranilate. Arginine 165 provides a ligand contact to anthranilate. 2 residues coordinate Mg(2+): aspartate 224 and glutamate 225.

The protein belongs to the anthranilate phosphoribosyltransferase family. As to quaternary structure, homodimer. Mg(2+) is required as a cofactor.

The enzyme catalyses N-(5-phospho-beta-D-ribosyl)anthranilate + diphosphate = 5-phospho-alpha-D-ribose 1-diphosphate + anthranilate. It functions in the pathway amino-acid biosynthesis; L-tryptophan biosynthesis; L-tryptophan from chorismate: step 2/5. Catalyzes the transfer of the phosphoribosyl group of 5-phosphorylribose-1-pyrophosphate (PRPP) to anthranilate to yield N-(5'-phosphoribosyl)-anthranilate (PRA). This is Anthranilate phosphoribosyltransferase from Methanobrevibacter smithii (strain ATCC 35061 / DSM 861 / OCM 144 / PS).